A 209-amino-acid polypeptide reads, in one-letter code: MTAALRGLYAITDTPLLAGGKLLPYAEAALIGGARLLQYRDKSGDAVRRLDEAQALAELCQRHGATLIINDDLELAAHLGVGLHLGQTDGSLAAARARLGADVVIGGTCHAQLELAERAVAEGASYIAFGRFFNSNTKPGAPAATVELLDQARTRFAQPIVAIGGVTLDNAPGLIARGASMVAVIHALFAADSALEVQDRARAFAALFD.

Residues 38–42 (QYRDK) and Asn-70 contribute to the 4-amino-2-methyl-5-(diphosphooxymethyl)pyrimidine site. The Mg(2+) site is built by Asp-71 and Asp-89. Thr-108 is a 4-amino-2-methyl-5-(diphosphooxymethyl)pyrimidine binding site. 135 to 137 (SNT) is a 2-[(2R,5Z)-2-carboxy-4-methylthiazol-5(2H)-ylidene]ethyl phosphate binding site. Lys-138 serves as a coordination point for 4-amino-2-methyl-5-(diphosphooxymethyl)pyrimidine. Residue Gly-165 participates in 2-[(2R,5Z)-2-carboxy-4-methylthiazol-5(2H)-ylidene]ethyl phosphate binding.

This sequence belongs to the thiamine-phosphate synthase family. It depends on Mg(2+) as a cofactor.

The catalysed reaction is 2-[(2R,5Z)-2-carboxy-4-methylthiazol-5(2H)-ylidene]ethyl phosphate + 4-amino-2-methyl-5-(diphosphooxymethyl)pyrimidine + 2 H(+) = thiamine phosphate + CO2 + diphosphate. It catalyses the reaction 2-(2-carboxy-4-methylthiazol-5-yl)ethyl phosphate + 4-amino-2-methyl-5-(diphosphooxymethyl)pyrimidine + 2 H(+) = thiamine phosphate + CO2 + diphosphate. It carries out the reaction 4-methyl-5-(2-phosphooxyethyl)-thiazole + 4-amino-2-methyl-5-(diphosphooxymethyl)pyrimidine + H(+) = thiamine phosphate + diphosphate. Its pathway is cofactor biosynthesis; thiamine diphosphate biosynthesis; thiamine phosphate from 4-amino-2-methyl-5-diphosphomethylpyrimidine and 4-methyl-5-(2-phosphoethyl)-thiazole: step 1/1. Functionally, condenses 4-methyl-5-(beta-hydroxyethyl)thiazole monophosphate (THZ-P) and 2-methyl-4-amino-5-hydroxymethyl pyrimidine pyrophosphate (HMP-PP) to form thiamine monophosphate (TMP). The protein is Thiamine-phosphate synthase of Ectopseudomonas mendocina (strain ymp) (Pseudomonas mendocina).